The sequence spans 147 residues: MRIYLRVVLPLSLALNSYGVLAFFWGERGVCAMRLLEREKKELVHHIQTLAERGRDLAAVVDALSFDEETIGAYARQLGYVRAGDVLVRPVNFTVAHMHTLDSGDARPLVAPACFSDTRCKVYALCVGFFVVLLQLLWGSARAYFKT.

Helical transmembrane passes span 4–26 (YLRVVLPLSLALNSYGVLAFFWG) and 123–145 (YALCVGFFVVLLQLLWGSARAYF).

The protein localises to the cell membrane. This is an uncharacterized protein from Treponema pallidum (strain Nichols).